Consider the following 44-residue polypeptide: Protein PsbN (44 aa).

Residues 6 to 26 traverse the membrane as a helical segment; the sequence is FFFTIFLWCLLLSVTGYSVYV.

It belongs to the PsbN family.

Its subcellular location is the plastid. It is found in the chloroplast thylakoid membrane. Its function is as follows. May play a role in photosystem I and II biogenesis. This is Protein PsbN from Oltmannsiellopsis viridis (Marine flagellate).